A 1173-amino-acid chain; its full sequence is WASH complex subunit 4 (1173 aa).

An N-acetylalanine modification is found at A2. A Phosphoserine modification is found at S7. The interval 705 to 1173 (KDLALFFSLN…STVSADPVVK (469 aa)) is sufficient for interaction with WASHC5. Residues 1135-1161 (RADKTAAEENQEKKEKEEETKTSNGDL) adopt a coiled-coil conformation. A compositionally biased stretch (basic and acidic residues) spans 1142–1155 (EENQEKKEKEEETK). The tract at residues 1142 to 1173 (EENQEKKEKEEETKTSNGDLSDSTVSADPVVK) is disordered. Residue T1154 is modified to Phosphothreonine. Residues 1157–1167 (SNGDLSDSTVS) are compositionally biased toward polar residues.

The protein belongs to the SWIP family. In terms of assembly, component of the WASH core complex also described as WASH regulatory complex (SHRC) composed of WASH (WASHC1, WASH2P or WASH3P), WASHC2 (WASHC2A or WASHC2C), WASHC3, WASHC4 and WASHC5. The WASH core complex associates via WASHC2 with the F-actin-capping protein dimer (formed by CAPZA1, CAPZA2 or CAPZA3 and CAPZB) in a transient or substoichiometric manner which was initially described as WASH complex.

The protein resides in the early endosome. Functionally, acts as a component of the WASH core complex that functions as a nucleation-promoting factor (NPF) at the surface of endosomes, where it recruits and activates the Arp2/3 complex to induce actin polymerization, playing a key role in the fission of tubules that serve as transport intermediates during endosome sorting. The sequence is that of WASH complex subunit 4 from Homo sapiens (Human).